Consider the following 590-residue polypeptide: Aspartate--tRNA(Asp/Asn) ligase (590 aa).

Glu-172 contacts L-aspartate. Residues 196-199 (QLFK) form an aspartate region. Arg-218 serves as a coordination point for L-aspartate. ATP contacts are provided by residues 218–220 (RDE) and Gln-227. His-449 provides a ligand contact to L-aspartate. Position 484 (Glu-484) interacts with ATP. Arg-491 provides a ligand contact to L-aspartate. 536 to 539 (GVDR) serves as a coordination point for ATP.

This sequence belongs to the class-II aminoacyl-tRNA synthetase family. Type 1 subfamily. In terms of assembly, homodimer.

The protein resides in the cytoplasm. The catalysed reaction is tRNA(Asx) + L-aspartate + ATP = L-aspartyl-tRNA(Asx) + AMP + diphosphate. Aspartyl-tRNA synthetase with relaxed tRNA specificity since it is able to aspartylate not only its cognate tRNA(Asp) but also tRNA(Asn). Reaction proceeds in two steps: L-aspartate is first activated by ATP to form Asp-AMP and then transferred to the acceptor end of tRNA(Asp/Asn). In Francisella tularensis subsp. tularensis (strain WY96-3418), this protein is Aspartate--tRNA(Asp/Asn) ligase.